Reading from the N-terminus, the 246-residue chain is 14-3-3 protein eta (246 aa).

Gly2 bears the N-acetylglycine mark. A phosphoserine mark is found at Ser25 and Ser59.

Belongs to the 14-3-3 family. Homodimer. Interacts with many nuclear hormone receptors and cofactors including AR, ESR1, ESR2, MC2R, NR3C1, NRIP1, PPARBP and THRA. Interacts with ABL1 (phosphorylated form); the interaction retains it in the cytoplasm. Interacts with ARHGEF28 and CDK16. Weakly interacts with CDKN1B. Interacts with GAB2. Interacts with KCNK18 in a phosphorylation-dependent manner. Interacts with SAMSN1. Interacts with the 'Ser-241' phosphorylated form of PDPK1. Interacts with the 'Thr-369' phosphorylated form of DAPK2. Interacts with PI4KB, TBC1D22A and TBC1D22B. Interacts with SLITRK1. Interacts with MEFV. In terms of processing, phosphorylated on Ser-59 by protein kinase C delta type catalytic subunit in a sphingosine-dependent fashion. In terms of tissue distribution, expressed mainly in the brain and present in other tissues albeit at lower levels.

Functionally, adapter protein implicated in the regulation of a large spectrum of both general and specialized signaling pathways. Binds to a large number of partners, usually by recognition of a phosphoserine or phosphothreonine motif. Binding generally results in the modulation of the activity of the binding partner. Negatively regulates the kinase activity of PDPK1. The sequence is that of 14-3-3 protein eta (YWHAH) from Homo sapiens (Human).